Here is a 312-residue protein sequence, read N- to C-terminus: Terpene synthase 8 (312 aa).

Residues 96 to 101 carry the DDxx(x)D/E motif motif; the sequence is DDYIYE. An NDxxSxxxD/E motif motif is present at residues 224-232; it reads NDCGSFKME.

The protein belongs to the terpene synthase family.

The catalysed reaction is (2E,6E)-farnesyl diphosphate + H2O = discoidol + diphosphate. Its pathway is sesquiterpene biosynthesis. Its function is as follows. Terpene synthase; part of the gene cluster that mediates the biosynthesis of the trisnorsesquiterpene discodiene which has a function during later stages of multicellular development, during the transition from fingers to Mexican hats. The terpene synthase tps8 converts its substrate farnesyl diphosphate (FDP) into the bicyclic sesquiterpene alcohol discoidol. The cytochrome P450 monooxygenase cyp521A1 then catalyzes the oxidative degradation of discoidol to form the trisnorsesquiterpene discodiene. This chain is Terpene synthase 8, found in Dictyostelium discoideum (Social amoeba).